Here is a 169-residue protein sequence, read N- to C-terminus: Endoribonuclease YbeY (169 aa).

Positions 126, 130, and 136 each coordinate Zn(2+).

It belongs to the endoribonuclease YbeY family. It depends on Zn(2+) as a cofactor.

The protein localises to the cytoplasm. In terms of biological role, single strand-specific metallo-endoribonuclease involved in late-stage 70S ribosome quality control and in maturation of the 3' terminus of the 16S rRNA. This Bradyrhizobium sp. (strain BTAi1 / ATCC BAA-1182) protein is Endoribonuclease YbeY.